The chain runs to 510 residues: Cytochrome P450 monooxygenase AFLA_114810 (510 aa).

The first 17 residues, 1–17 (MLILLGLLCLYTGLYVA), serve as a signal peptide directing secretion. Residue cysteine 444 coordinates heme.

This sequence belongs to the cytochrome P450 family. Requires heme as cofactor.

The protein operates within secondary metabolite biosynthesis. In terms of biological role, cytochrome P450 monooxygenase; part of the gene cluster 41 that mediates the biosynthesis of an extracellular and diffusible metabolite that is able to stimulate colony sclerotial production. The chain is Cytochrome P450 monooxygenase AFLA_114810 from Aspergillus flavus (strain ATCC 200026 / FGSC A1120 / IAM 13836 / NRRL 3357 / JCM 12722 / SRRC 167).